The following is a 200-amino-acid chain: Proteasome subunit beta 2 (200 aa).

A propeptide spans 1–7 (MEEKKTG) (removed in mature form; by autocatalysis). The active-site Nucleophile is Thr-8.

This sequence belongs to the peptidase T1B family. As to quaternary structure, the 20S proteasome core is composed of 14 alpha and 14 beta subunits that assemble into four stacked heptameric rings, resulting in a barrel-shaped structure. The two inner rings, each composed of seven catalytic beta subunits, are sandwiched by two outer rings, each composed of seven alpha subunits. The catalytic chamber with the active sites is on the inside of the barrel. Has a gated structure, the ends of the cylinder being occluded by the N-termini of the alpha-subunits. Is capped at one or both ends by the proteasome regulatory ATPase, PAN.

It localises to the cytoplasm. The enzyme catalyses Cleavage of peptide bonds with very broad specificity.. Its activity is regulated as follows. The formation of the proteasomal ATPase PAN-20S proteasome complex, via the docking of the C-termini of PAN into the intersubunit pockets in the alpha-rings, triggers opening of the gate for substrate entry. Interconversion between the open-gate and close-gate conformations leads to a dynamic regulation of the 20S proteasome proteolysis activity. Functionally, component of the proteasome core, a large protease complex with broad specificity involved in protein degradation. The sequence is that of Proteasome subunit beta 2 from Thermococcus gammatolerans (strain DSM 15229 / JCM 11827 / EJ3).